The following is a 1943-amino-acid chain: Beta-L-arabinobiosidase (1943 aa).

Positions 1-32 (MHHSTRKRWLASIGAVAAVATLATGGAVTAQA) form a signal peptide, tat-type signal. F5/8 type C domains are found at residues 892 to 1049 (TNVD…AYNT) and 1142 to 1302 (SKEI…AYAI). The PKD domain occupies 1061-1157 (TPQVDAYVSS…HGIPSDGTVN (97 aa)). 3 consecutive FIVAR domains span residues 1678–1716 (ANGLDASRYTAASWAEFQQIIDAAQAVYDDANATAEQVA), 1746–1790 (DAAK…AAVQ), and 1823–1864 (QAKK…VDAA). The interval 1875–1906 (TKVEQKPGSQQPGVTDTDKDDKDNKGDRVPPT) is disordered. Basic and acidic residues predominate over residues 1890–1902 (DTDKDDKDNKGDR). The helical transmembrane segment at 1908-1928 (AAVSVVAAAAVLLTAAGVTIL) threads the bilayer.

This sequence belongs to the glycosyl hydrolase 121 family. Post-translationally, predicted to be exported by the Tat system. The position of the signal peptide cleavage has not been experimentally proven.

It localises to the membrane. It carries out the reaction 4-O-(beta-L-arabinofuranosyl-(1-&gt;2)-beta-L-arabinofuranosyl-(1-&gt;2)-beta-L-arabinofuranosyl)-(2S,4S)-4-hydroxyproline + H2O = 4-O-(beta-L-arabinofuranosyl)-(2S,4S)-4-hydroxyproline + beta-L-arabinofuranosyl-(1-&gt;2)-beta-L-arabinofuranose. Its function is as follows. Beta-L-arabinobiosidase that removes L-arabinofuranose-beta-1,2-L-arabinofuranose disaccharide from various substrates such as carrot extensin and potato lectin. Also acts on L-arabinofuranose (Ara)-beta-1,2-Ara-beta-1,2-Ara-beta-Hyp (Ara(3)-Hyp) but not on Ara-beta-1,3-Ara-beta-1,2-Ara-beta-1,2-Ara-beta--Hyp (Ara(4)-Hyp) or Ara-beta-1,2-Ara-beta-Hyp (Ara(2)-Hyp), suggesting a specificity for unmodified Ara(3)-Hyp substrate. In the presence of 1-alkanols, shows transglycosylation activity, retaining the anomeric configuration of the arabinofuranose residue. This Bifidobacterium longum subsp. longum (strain ATCC 15707 / DSM 20219 / JCM 1217 / NCTC 11818 / E194b) protein is Beta-L-arabinobiosidase (hypBA2).